Here is a 1163-residue protein sequence, read N- to C-terminus: Putative beta-glucuronidase (1163 aa).

The first 20 residues, 1-20 (MPRFLKYILGLFLISISAFG), serve as a signal peptide directing secretion.

The protein belongs to the glycosyl hydrolase 2 family.

It is found in the periplasm. The catalysed reaction is a beta-D-glucuronoside + H2O = D-glucuronate + an alcohol. In terms of biological role, glycoside hydrolase involved in ulvan degradation. Ulvan is the main polysaccharide component of the Ulvales (green seaweed) cell wall. It is composed of disaccharide building blocks comprising 3-sulfated rhamnose (Rha3S) linked to D-glucuronic acid (GlcA), L-iduronic acid (IduA), or D-xylose (Xyl). This Formosa agariphila (strain DSM 15362 / KCTC 12365 / LMG 23005 / KMM 3901 / M-2Alg 35-1) protein is Putative beta-glucuronidase.